The sequence spans 153 residues: Movement protein TGB3 (153 aa).

Topologically, residues 1–50 (MEAPAITHSSGCVCSDCQWSGSPTVDTKVYLGSGTHANTTKTRETSFLSV) are cytoplasmic. A helical membrane pass occupies residues 51-71 (LNDNAWLFVIAALILCLYFII). The Lumenal segment spans residues 72-127 (SKPHVDAVYTEFHQDLNGFSMKLAPGVPIDPKVIAAVKNWQKYPFGTDPRENMVTS). Residues 128–148 (IVSGLRHSFCILLLVVVLLVY) traverse the membrane as a helical segment. Residues 149 to 153 (VCHKP) lie on the Cytoplasmic side of the membrane.

It belongs to the virgaviridae TGB3 movement protein family. As to quaternary structure, interacts with movement proteins TGB1 and TGB2. TGB1-TGB3-TGB2 complex formation is enhanced by ATP hydrolysis.

Its subcellular location is the host cell junction. It localises to the host plasmodesma. It is found in the host endoplasmic reticulum membrane. The protein resides in the host cytoplasm. The protein localises to the host cytoskeleton. In terms of biological role, participates in the transport of viral genome to neighboring plant cells directly through plasmodesmata, without any budding. TGBp2 and TGBp3 are necessary for intracellular delivery of TGBp1-containing vRNPs to plasmodesmata. Can gate plasmodesmata and increase their size exclusion limit. Induces host actin cytoskeleton network thickening, which probably plays a major role in virus cell-to-cell movement. This chain is Movement protein TGB3, found in Arachis hypogaea (Peanut).